Reading from the N-terminus, the 427-residue chain is Adenylosuccinate synthetase (427 aa).

GTP contacts are provided by residues 12–18 (GDEGKGK) and 40–42 (GHT). Asp13 (proton acceptor) is an active-site residue. Asp13 and Gly40 together coordinate Mg(2+). IMP is bound by residues 13 to 16 (DEGK), 38 to 41 (NAGH), Thr128, Arg142, Gln223, Thr238, and Arg302. The Proton donor role is filled by His41. 298 to 304 (VTTGRAR) is a substrate binding site. GTP-binding positions include Arg304, 330–332 (KLD), and 412–414 (GVG).

The protein belongs to the adenylosuccinate synthetase family. Homodimer. Mg(2+) is required as a cofactor.

Its subcellular location is the cytoplasm. It catalyses the reaction IMP + L-aspartate + GTP = N(6)-(1,2-dicarboxyethyl)-AMP + GDP + phosphate + 2 H(+). Its pathway is purine metabolism; AMP biosynthesis via de novo pathway; AMP from IMP: step 1/2. Its function is as follows. Plays an important role in the de novo pathway of purine nucleotide biosynthesis. Catalyzes the first committed step in the biosynthesis of AMP from IMP. This is Adenylosuccinate synthetase from Frankia alni (strain DSM 45986 / CECT 9034 / ACN14a).